The following is a 185-amino-acid chain: Ribosome-recycling factor (185 aa).

It belongs to the RRF family.

It localises to the cytoplasm. Functionally, responsible for the release of ribosomes from messenger RNA at the termination of protein biosynthesis. May increase the efficiency of translation by recycling ribosomes from one round of translation to another. The sequence is that of Ribosome-recycling factor from Alkalilimnicola ehrlichii (strain ATCC BAA-1101 / DSM 17681 / MLHE-1).